Consider the following 440-residue polypeptide: Origin recognition complex subunit 4 (440 aa).

64 to 71 lines the ATP pocket; that stretch reads GPKGSGKS.

The protein belongs to the ORC4 family. ORC is composed of six subunits.

The protein localises to the nucleus. Functionally, component of the origin recognition complex (ORC) that binds origins of replication. DNA-binding is ATP-dependent, however specific DNA sequences that define origins of replication have not been identified so far. ORC is required to assemble the pre-replication complex necessary to initiate DNA replication. The polypeptide is Origin recognition complex subunit 4 (orcD) (Dictyostelium discoideum (Social amoeba)).